We begin with the raw amino-acid sequence, 358 residues long: MTQLFPGPIVRTPGLAELDARARDIFRRVVESYLETGEPVGSRTISKGGVALSPASIRNTMQDLAQLGLLDAPHTSAGRMPTHAGLRMFVDGFLEVGDVAEQEKRAIEARLAVKGRSFEEALAEASSILSGLAGGAGIVVTPVREGGVKHVEFVPLGGGQVLAVMVFEDGQVENRLMRQAPGVTPSALQEASNFLNARLRGRTLTEARTEMGGELDAARRQLNETAARLVEDGLAAWSGGEGDARSLIVRGQANLLADARAREDIDRVRQLFDDLSRRAQLIGLLDDVRDAEGVRIYIGAETRLFSLSGSSVIAAPYMTGRQKVLGAIGVIGPARLNYARVIPLVDYTARVLGRMMDG.

Belongs to the HrcA family.

Functionally, negative regulator of class I heat shock genes (grpE-dnaK-dnaJ and groELS operons). Prevents heat-shock induction of these operons. This chain is Heat-inducible transcription repressor HrcA, found in Caulobacter vibrioides (strain ATCC 19089 / CIP 103742 / CB 15) (Caulobacter crescentus).